The following is a 275-amino-acid chain: Ribosomal RNA small subunit methyltransferase A (275 aa).

The S-adenosyl-L-methionine site is built by Asn27, Leu29, Gly54, Glu76, Asp102, and Asn123.

This sequence belongs to the class I-like SAM-binding methyltransferase superfamily. rRNA adenine N(6)-methyltransferase family. RsmA subfamily.

Its subcellular location is the cytoplasm. It catalyses the reaction adenosine(1518)/adenosine(1519) in 16S rRNA + 4 S-adenosyl-L-methionine = N(6)-dimethyladenosine(1518)/N(6)-dimethyladenosine(1519) in 16S rRNA + 4 S-adenosyl-L-homocysteine + 4 H(+). Its function is as follows. Specifically dimethylates two adjacent adenosines (A1518 and A1519) in the loop of a conserved hairpin near the 3'-end of 16S rRNA in the 30S particle. May play a critical role in biogenesis of 30S subunits. This is Ribosomal RNA small subunit methyltransferase A from Chelativorans sp. (strain BNC1).